Consider the following 355-residue polypeptide: Beta-1,2-mannobiose phosphorylase (355 aa).

Beta-D-Manp-(1-&gt;2)-beta-D-Manp-(1-&gt;2)-D-Manp-binding positions include Asn-31, Arg-46, Arg-89, 140–141, Lys-188, Tyr-273, and Asp-333; that span reads ED.

Belongs to the glycosyl hydrolase 130 family. In terms of assembly, homodimer.

It carries out the reaction beta-D-mannopyranosyl-(1-&gt;2)-D-mannopyranose + phosphate = alpha-D-mannose 1-phosphate + D-mannose. In terms of biological role, catalyzes the reversible phosphorolysis of 1,2-beta-oligomannan. In phosphorolytic reactions, prefers beta-1,2-mannobiose (beta-1,2-Man2) as substrate, but can also use beta-1,2-mannotriose. The polypeptide is Beta-1,2-mannobiose phosphorylase (Listeria innocua serovar 6a (strain ATCC BAA-680 / CLIP 11262)).